The sequence spans 285 residues: Glycine--tRNA ligase alpha subunit (285 aa).

Belongs to the class-II aminoacyl-tRNA synthetase family. Tetramer of two alpha and two beta subunits.

The protein localises to the cytoplasm. It carries out the reaction tRNA(Gly) + glycine + ATP = glycyl-tRNA(Gly) + AMP + diphosphate. The chain is Glycine--tRNA ligase alpha subunit from Thermodesulfovibrio yellowstonii (strain ATCC 51303 / DSM 11347 / YP87).